We begin with the raw amino-acid sequence, 804 residues long: Phosphatidylinositol 4-kinase beta (804 aa).

Positions 55 to 245 (LEKVKMIHGS…GTKLRKLILS (191 aa)) constitute a PIK helical domain. 2 disordered regions span residues 69 to 122 (LDKV…ARRR) and 251 to 309 (AHKK…EPVR). Composition is skewed to polar residues over residues 91-103 (KLTNTGHTSTSSR) and 281-300 (DATVSISLSSNLKRTSSNPK). The PI3K/PI4K catalytic domain maps to 523 to 789 (EPWEEKVRRI…MVDGSMRSIT (267 aa)). The segment at 529-535 (VRRIREG) is G-loop. The segment at 656–664 (QVKDRHNGN) is catalytic loop. Positions 675–699 (HIDFGFILSSSPRNLGFETSAFKLT) are activation loop.

This sequence belongs to the PI3/PI4-kinase family. Type III PI4K subfamily. It depends on Mg(2+) as a cofactor. Mn(2+) serves as cofactor.

The protein resides in the endomembrane system. The protein localises to the mitochondrion outer membrane. Its subcellular location is the rough endoplasmic reticulum membrane. The catalysed reaction is a 1,2-diacyl-sn-glycero-3-phospho-(1D-myo-inositol) + ATP = a 1,2-diacyl-sn-glycero-3-phospho-(1D-myo-inositol 4-phosphate) + ADP + H(+). In terms of biological role, phosphorylates phosphatidylinositol (PI) in the first committed step in the production of the second messenger inositol-1,4,5,-trisphosphate (PIP). May play an important role in the inner ear development. This Xenopus laevis (African clawed frog) protein is Phosphatidylinositol 4-kinase beta (pi4kb).